A 154-amino-acid chain; its full sequence is Prefoldin subunit alpha (154 aa).

Residues 119–154 (EKAEVETEMEELEQQAQQMQQQQMQQMMQQQEQEDE) form a disordered region. Residues 132–154 (QQAQQMQQQQMQQMMQQQEQEDE) show a composition bias toward low complexity.

Belongs to the prefoldin subunit alpha family. As to quaternary structure, heterohexamer of two alpha and four beta subunits.

Its subcellular location is the cytoplasm. Molecular chaperone capable of stabilizing a range of proteins. Seems to fulfill an ATP-independent, HSP70-like function in archaeal de novo protein folding. This is Prefoldin subunit alpha from Haloarcula marismortui (strain ATCC 43049 / DSM 3752 / JCM 8966 / VKM B-1809) (Halobacterium marismortui).